A 264-amino-acid polypeptide reads, in one-letter code: 3-methyl-2-oxobutanoate hydroxymethyltransferase (264 aa).

Mg(2+) is bound by residues Asp-45 and Asp-84. Residues 45-46 (DS), Asp-84, and Lys-112 contribute to the 3-methyl-2-oxobutanoate site. Position 114 (Glu-114) interacts with Mg(2+). Catalysis depends on Glu-181, which acts as the Proton acceptor.

It belongs to the PanB family. As to quaternary structure, homodecamer; pentamer of dimers. Requires Mg(2+) as cofactor.

It localises to the cytoplasm. It catalyses the reaction 3-methyl-2-oxobutanoate + (6R)-5,10-methylene-5,6,7,8-tetrahydrofolate + H2O = 2-dehydropantoate + (6S)-5,6,7,8-tetrahydrofolate. The protein operates within cofactor biosynthesis; (R)-pantothenate biosynthesis; (R)-pantoate from 3-methyl-2-oxobutanoate: step 1/2. Its function is as follows. Catalyzes the reversible reaction in which hydroxymethyl group from 5,10-methylenetetrahydrofolate is transferred onto alpha-ketoisovalerate to form ketopantoate. This Escherichia coli O17:K52:H18 (strain UMN026 / ExPEC) protein is 3-methyl-2-oxobutanoate hydroxymethyltransferase.